The primary structure comprises 286 residues: Glycine--tRNA ligase alpha subunit (286 aa).

Belongs to the class-II aminoacyl-tRNA synthetase family. Tetramer of two alpha and two beta subunits.

The protein resides in the cytoplasm. It carries out the reaction tRNA(Gly) + glycine + ATP = glycyl-tRNA(Gly) + AMP + diphosphate. The protein is Glycine--tRNA ligase alpha subunit of Campylobacter concisus (strain 13826).